A 387-amino-acid polypeptide reads, in one-letter code: Acyltransferase MdmB (387 aa).

Helical transmembrane passes span 8-28 (LPSL…CHIA), 45-65 (ITTL…FVLA), 85-105 (IYPL…SLAE), 139-161 (TPSW…YRLV), 170-190 (WWCA…TSQF), 209-229 (CWLP…ALIL), 236-256 (GPGV…TQVV), 258-278 (PMFT…TALA), 292-312 (AVLV…FMVI), and 336-356 (ALAL…HTVV).

This sequence belongs to the acyltransferase 3 family.

It localises to the cell membrane. Catalyzes the acylation of the mycaminose sugar during midecamycin biosynthesis. The chain is Acyltransferase MdmB (mdmB) from Streptomyces mycarofaciens.